Consider the following 251-residue polypeptide: Aspartate/glutamate leucyltransferase (251 aa).

This sequence belongs to the R-transferase family. Bpt subfamily.

It is found in the cytoplasm. The catalysed reaction is N-terminal L-glutamyl-[protein] + L-leucyl-tRNA(Leu) = N-terminal L-leucyl-L-glutamyl-[protein] + tRNA(Leu) + H(+). The enzyme catalyses N-terminal L-aspartyl-[protein] + L-leucyl-tRNA(Leu) = N-terminal L-leucyl-L-aspartyl-[protein] + tRNA(Leu) + H(+). Functions in the N-end rule pathway of protein degradation where it conjugates Leu from its aminoacyl-tRNA to the N-termini of proteins containing an N-terminal aspartate or glutamate. This chain is Aspartate/glutamate leucyltransferase, found in Xanthomonas oryzae pv. oryzae (strain KACC10331 / KXO85).